A 347-amino-acid polypeptide reads, in one-letter code: Protein RecA (347 aa).

65 to 72 provides a ligand contact to ATP; sequence GPESSGKT. Over residues 327-336 the composition is skewed to basic and acidic residues; it reads KFEPTELSRE. Residues 327 to 347 form a disordered region; that stretch reads KFEPTELSREEGDEDTLEDTM. Over residues 337–347 the composition is skewed to acidic residues; sequence EGDEDTLEDTM.

Belongs to the RecA family.

The protein localises to the cytoplasm. Its function is as follows. Can catalyze the hydrolysis of ATP in the presence of single-stranded DNA, the ATP-dependent uptake of single-stranded DNA by duplex DNA, and the ATP-dependent hybridization of homologous single-stranded DNAs. It interacts with LexA causing its activation and leading to its autocatalytic cleavage. This chain is Protein RecA, found in Xylella fastidiosa (strain 9a5c).